The sequence spans 351 residues: Phospho-N-acetylmuramoyl-pentapeptide-transferase (351 aa).

10 helical membrane-spanning segments follow: residues 17–37 (MAYA…HIIL), 62–82 (GIPT…LVFW), 85–105 (ILNV…FLGF), 130–150 (IIFS…HVSI), 163–183 (LGVF…NSFN), 190–210 (GLAI…AYIT), 230–250 (LVIF…FNAY), 254–274 (IMMG…TALI), 281–301 (FSIL…QVIV), and 328–348 (QVVI…LSTI).

This sequence belongs to the glycosyltransferase 4 family. MraY subfamily. Mg(2+) serves as cofactor.

Its subcellular location is the cell inner membrane. It catalyses the reaction UDP-N-acetyl-alpha-D-muramoyl-L-alanyl-gamma-D-glutamyl-meso-2,6-diaminopimeloyl-D-alanyl-D-alanine + di-trans,octa-cis-undecaprenyl phosphate = di-trans,octa-cis-undecaprenyl diphospho-N-acetyl-alpha-D-muramoyl-L-alanyl-D-glutamyl-meso-2,6-diaminopimeloyl-D-alanyl-D-alanine + UMP. It participates in cell wall biogenesis; peptidoglycan biosynthesis. Functionally, catalyzes the initial step of the lipid cycle reactions in the biosynthesis of the cell wall peptidoglycan: transfers peptidoglycan precursor phospho-MurNAc-pentapeptide from UDP-MurNAc-pentapeptide onto the lipid carrier undecaprenyl phosphate, yielding undecaprenyl-pyrophosphoryl-MurNAc-pentapeptide, known as lipid I. This Borreliella afzelii (strain PKo) (Borrelia afzelii) protein is Phospho-N-acetylmuramoyl-pentapeptide-transferase.